A 293-amino-acid polypeptide reads, in one-letter code: Phosphatidylserine decarboxylase proenzyme (293 aa).

Residues Asp88, His144, and Ser247 each act as charge relay system; for autoendoproteolytic cleavage activity in the active site. Ser247 acts as the Schiff-base intermediate with substrate; via pyruvic acid; for decarboxylase activity in catalysis. Ser247 bears the Pyruvic acid (Ser); by autocatalysis mark.

It belongs to the phosphatidylserine decarboxylase family. PSD-B subfamily. Prokaryotic type I sub-subfamily. In terms of assembly, heterodimer of a large membrane-associated beta subunit and a small pyruvoyl-containing alpha subunit. The cofactor is pyruvate. Post-translationally, is synthesized initially as an inactive proenzyme. Formation of the active enzyme involves a self-maturation process in which the active site pyruvoyl group is generated from an internal serine residue via an autocatalytic post-translational modification. Two non-identical subunits are generated from the proenzyme in this reaction, and the pyruvate is formed at the N-terminus of the alpha chain, which is derived from the carboxyl end of the proenzyme. The autoendoproteolytic cleavage occurs by a canonical serine protease mechanism, in which the side chain hydroxyl group of the serine supplies its oxygen atom to form the C-terminus of the beta chain, while the remainder of the serine residue undergoes an oxidative deamination to produce ammonia and the pyruvoyl prosthetic group on the alpha chain. During this reaction, the Ser that is part of the protease active site of the proenzyme becomes the pyruvoyl prosthetic group, which constitutes an essential element of the active site of the mature decarboxylase.

Its subcellular location is the cell membrane. It carries out the reaction a 1,2-diacyl-sn-glycero-3-phospho-L-serine + H(+) = a 1,2-diacyl-sn-glycero-3-phosphoethanolamine + CO2. It participates in phospholipid metabolism; phosphatidylethanolamine biosynthesis; phosphatidylethanolamine from CDP-diacylglycerol: step 2/2. Its function is as follows. Catalyzes the formation of phosphatidylethanolamine (PtdEtn) from phosphatidylserine (PtdSer). The chain is Phosphatidylserine decarboxylase proenzyme from Xylella fastidiosa (strain M23).